The primary structure comprises 612 residues: Rhotekin-2 (612 aa).

The region spanning 3–79 is the REM-1 domain; sequence IKRKKIRESA…LRSQMGESNT (77 aa). Residues 285–392 enclose the PH domain; sequence DEAMMGFLNQ…WMEAFWQHFY (108 aa). Disordered stretches follow at residues 483–530 and 574–612; these read RNKP…SDKE and ENKA…QSQV. The span at 486–498 shows a compositional bias: low complexity; the sequence is PPLLSSDDPSTSS.

The protein is Rhotekin-2 (rtkn2) of Xenopus laevis (African clawed frog).